Consider the following 328-residue polypeptide: D-cysteine desulfhydrase (328 aa).

K51 carries the N6-(pyridoxal phosphate)lysine modification.

This sequence belongs to the ACC deaminase/D-cysteine desulfhydrase family. As to quaternary structure, homodimer. It depends on pyridoxal 5'-phosphate as a cofactor.

It catalyses the reaction D-cysteine + H2O = hydrogen sulfide + pyruvate + NH4(+) + H(+). In terms of biological role, catalyzes the alpha,beta-elimination reaction of D-cysteine and of several D-cysteine derivatives. It could be a defense mechanism against D-cysteine. The polypeptide is D-cysteine desulfhydrase (Shigella boydii serotype 18 (strain CDC 3083-94 / BS512)).